The primary structure comprises 378 residues: Putative protein YbfL (378 aa).

The protein belongs to the transposase 11 family.

The sequence is that of Putative protein YbfL (ybfL) from Escherichia coli (strain K12).